The following is a 614-amino-acid chain: UvrABC system protein C (614 aa).

In terms of domain architecture, GIY-YIG spans 14 to 91; sequence TSPGCYIHKD…IKENKPKYNI (78 aa). Positions 196–231 constitute a UVR domain; sequence DKIIDDLKSKMAVAAQSMEFERAAEYRDLIQAIGTL. The tract at residues 595–614 is disordered; sequence LSQVAEERVDYQTEGNHNEP. Over residues 599–614 the composition is skewed to basic and acidic residues; sequence AEERVDYQTEGNHNEP.

It belongs to the UvrC family. In terms of assembly, interacts with UvrB in an incision complex.

Its subcellular location is the cytoplasm. Functionally, the UvrABC repair system catalyzes the recognition and processing of DNA lesions. UvrC both incises the 5' and 3' sides of the lesion. The N-terminal half is responsible for the 3' incision and the C-terminal half is responsible for the 5' incision. This Streptococcus pneumoniae serotype 2 (strain D39 / NCTC 7466) protein is UvrABC system protein C.